The sequence spans 468 residues: 6-phosphogluconate dehydrogenase, decarboxylating (468 aa).

NADP(+)-binding positions include 9–14 (GLAVMG), 32–34 (NRS), 73–75 (VQA), and Asn-101. Substrate is bound by residues Asn-101 and 127-129 (SGG). Catalysis depends on Lys-182, which acts as the Proton acceptor. 185-186 (HN) contacts substrate. Glu-189 (proton donor) is an active-site residue. The substrate site is built by Tyr-190, Lys-259, Arg-286, Arg-444, and His-450.

This sequence belongs to the 6-phosphogluconate dehydrogenase family. As to quaternary structure, homodimer.

The enzyme catalyses 6-phospho-D-gluconate + NADP(+) = D-ribulose 5-phosphate + CO2 + NADPH. The protein operates within carbohydrate degradation; pentose phosphate pathway; D-ribulose 5-phosphate from D-glucose 6-phosphate (oxidative stage): step 3/3. In terms of biological role, catalyzes the oxidative decarboxylation of 6-phosphogluconate to ribulose 5-phosphate and CO(2), with concomitant reduction of NADP to NADPH. This Staphylococcus aureus (strain Mu50 / ATCC 700699) protein is 6-phosphogluconate dehydrogenase, decarboxylating (gnd).